The sequence spans 144 residues: Large ribosomal subunit protein uL15 (144 aa).

The interval 1–59 (MHLNTLAPAPGAKKSSKRVGRGMGSGLGKTGGRGHKGQKSRSGGSVKPGFEGGQMPIQR) is disordered. Gly residues predominate over residues 21–31 (RGMGSGLGKTG).

The protein belongs to the universal ribosomal protein uL15 family. As to quaternary structure, part of the 50S ribosomal subunit.

Binds to the 23S rRNA. The protein is Large ribosomal subunit protein uL15 of Pseudoalteromonas atlantica (strain T6c / ATCC BAA-1087).